Consider the following 317-residue polypeptide: Beta-ketoacyl-[acyl-carrier-protein] synthase III (317 aa).

Residues Cys-112 and His-244 contribute to the active site. The segment at 245-249 (QANLR) is ACP-binding. The active site involves Asn-274.

This sequence belongs to the thiolase-like superfamily. FabH family. As to quaternary structure, homodimer.

The protein localises to the cytoplasm. The catalysed reaction is malonyl-[ACP] + acetyl-CoA + H(+) = 3-oxobutanoyl-[ACP] + CO2 + CoA. Its pathway is lipid metabolism; fatty acid biosynthesis. Its function is as follows. Catalyzes the condensation reaction of fatty acid synthesis by the addition to an acyl acceptor of two carbons from malonyl-ACP. Catalyzes the first condensation reaction which initiates fatty acid synthesis and may therefore play a role in governing the total rate of fatty acid production. Possesses both acetoacetyl-ACP synthase and acetyl transacylase activities. Its substrate specificity determines the biosynthesis of branched-chain and/or straight-chain of fatty acids. The polypeptide is Beta-ketoacyl-[acyl-carrier-protein] synthase III (Blochmanniella pennsylvanica (strain BPEN)).